Here is a 374-residue protein sequence, read N- to C-terminus: GDSL esterase/lipase 1 (374 aa).

The first 25 residues, 1-25 (MENSQLVSITFLAYTIIISIGSINC), serve as a signal peptide directing secretion. N-linked (GlcNAc...) asparagine glycosylation occurs at asparagine 34. Residue serine 44 is the Nucleophile of the active site. Asparagine 184, asparagine 203, and asparagine 330 each carry an N-linked (GlcNAc...) asparagine glycan. Residues aspartate 338 and histidine 341 each act as charge relay system in the active site. A glycan (N-linked (GlcNAc...) asparagine) is linked at asparagine 360.

It belongs to the 'GDSL' lipolytic enzyme family.

The protein localises to the secreted. Confers resistance to the necrotrophic fungus Alternaria brassicicola. Possesses lipase and antimicrobial activities that directly disrupt fungal spore integrity. Triggers systemic resistance, mostly by the ethylene-dependent pathway. The polypeptide is GDSL esterase/lipase 1 (Arabidopsis thaliana (Mouse-ear cress)).